A 176-amino-acid chain; its full sequence is Oxaleimides biosynthesis cluster protein N (176 aa).

4 helical membrane passes run 5–25 (LLVV…PLIT), 71–91 (VWTG…LNLF), 104–124 (FLYG…PKML), and 155–175 (FWIV…EGLK).

The protein localises to the membrane. It functions in the pathway secondary metabolite biosynthesis. In terms of biological role, part of the gene cluster that mediates the biosynthesis of oxaleimides, cytotoxic compounds containing an unusual disubstituted succinimide moiety. The first step of the pathway is provided by the HR-PKS poxF that serves in a new mode of collaborative biosynthesis with the PKS-NRPS poxE, by providing the olefin containing amino acid substrate via the synthesis of an ACP-bound dec-4-enoate. The cytochrome P450 monooxygenase poxM-catalyzed oxidation at the alpha-position creates the enzyme-bound 2-hydroxydec-4-enoyl-ACP thioester, which may be prone to spontaneous hydrolysis to yield 2-hydroxydec-4-enoic acid due to increased electrophilicity of the carbonyl. 2-hydroxydec-4-enoic acid can then be further oxidized by poxM to yield the alpha-ketoacid 2-oxodec-4-enoicacid, which is reductively aminated by the aminotransferase poxL to yield (S,E)-2-aminodec-4-enoic acid. The Hybrid PKS-NRPS synthetase poxE then performs condensation between the octaketide product of its PKS modules and the amino group of (S,E)-2-aminodec-4-enoic acid which is activated and incorporated by the adenylation domain. The resulting aminoacyl product can be cyclized by the Diels-Alderase PoxQ and reductively released by the reductive (R) domain of poxE to yield an aldehyde intermediate. The released aldehyde is then substrate for a Knoevenagel condensation by the hydrolyase poxO followed by an oxidation at the 5-position of the pyrrolidone ring. The presence of the olefin from the amino acid building block allows for migration of the substituted allyl group to occur. This allylic transposition reaction takes place in a conjugate addition, semipinacol-like fashion to yield a succinimide intermediate. Iterative two-electron oxidations of the C7 methyl of the succinimide intermediate to the carboxylic acid can be catalyzed by one of two remaining cytochrome P450 monooxygenasess poxC or poxD to yield oxaleimide A. Subsequent oxidation yields the maleimide scaffold oxaleimide I. Both oxaleimide A and oxaleimide I can undergo oxidative modifications in the decalin ring to yield the series of products oxaleimides B to H. This is Oxaleimides biosynthesis cluster protein N from Penicillium oxalicum (strain 114-2 / CGMCC 5302) (Penicillium decumbens).